A 499-amino-acid polypeptide reads, in one-letter code: Putative protease Do-like 12, mitochondrial (499 aa).

Residues 1–24 constitute a mitochondrion transit peptide; sequence MLFRSCVGMVSRYSRALLPTITIS. Residues 94-259 form a serine protease region; it reads GGSGFAIAGK…IPTPIIRHFI (166 aa). Active-site charge relay system residues include His-110, Asp-144, and Ser-222. Residues 272–356 form the PDZ domain; it reads GSLVLSCQSM…DENILVKVLR (85 aa).

This sequence belongs to the peptidase S1C family.

The protein resides in the mitochondrion matrix. Functionally, putative serine protease. This is Putative protease Do-like 12, mitochondrial (DEGP12) from Arabidopsis thaliana (Mouse-ear cress).